Here is a 292-residue protein sequence, read N- to C-terminus: Glycine--tRNA ligase alpha subunit (292 aa).

This sequence belongs to the class-II aminoacyl-tRNA synthetase family. Tetramer of two alpha and two beta subunits.

It localises to the cytoplasm. The enzyme catalyses tRNA(Gly) + glycine + ATP = glycyl-tRNA(Gly) + AMP + diphosphate. In Syntrophus aciditrophicus (strain SB), this protein is Glycine--tRNA ligase alpha subunit.